The sequence spans 315 residues: 4-hydroxy-3-methylbut-2-enyl diphosphate reductase (315 aa).

Position 12 (Cys12) interacts with [4Fe-4S] cluster. (2E)-4-hydroxy-3-methylbut-2-enyl diphosphate is bound by residues His41 and His74. The dimethylallyl diphosphate site is built by His41 and His74. Positions 41 and 74 each coordinate isopentenyl diphosphate. Cys96 contributes to the [4Fe-4S] cluster binding site. His124 contributes to the (2E)-4-hydroxy-3-methylbut-2-enyl diphosphate binding site. His124 contacts dimethylallyl diphosphate. His124 contacts isopentenyl diphosphate. Glu126 (proton donor) is an active-site residue. Thr168 is a (2E)-4-hydroxy-3-methylbut-2-enyl diphosphate binding site. Cys198 contributes to the [4Fe-4S] cluster binding site. Ser226, Ser227, Asn228, and Ser270 together coordinate (2E)-4-hydroxy-3-methylbut-2-enyl diphosphate. Residues Ser226, Ser227, Asn228, and Ser270 each coordinate dimethylallyl diphosphate. Positions 226, 227, 228, and 270 each coordinate isopentenyl diphosphate.

The protein belongs to the IspH family. The cofactor is [4Fe-4S] cluster.

It catalyses the reaction isopentenyl diphosphate + 2 oxidized [2Fe-2S]-[ferredoxin] + H2O = (2E)-4-hydroxy-3-methylbut-2-enyl diphosphate + 2 reduced [2Fe-2S]-[ferredoxin] + 2 H(+). It carries out the reaction dimethylallyl diphosphate + 2 oxidized [2Fe-2S]-[ferredoxin] + H2O = (2E)-4-hydroxy-3-methylbut-2-enyl diphosphate + 2 reduced [2Fe-2S]-[ferredoxin] + 2 H(+). Its pathway is isoprenoid biosynthesis; dimethylallyl diphosphate biosynthesis; dimethylallyl diphosphate from (2E)-4-hydroxy-3-methylbutenyl diphosphate: step 1/1. It participates in isoprenoid biosynthesis; isopentenyl diphosphate biosynthesis via DXP pathway; isopentenyl diphosphate from 1-deoxy-D-xylulose 5-phosphate: step 6/6. In terms of biological role, catalyzes the conversion of 1-hydroxy-2-methyl-2-(E)-butenyl 4-diphosphate (HMBPP) into a mixture of isopentenyl diphosphate (IPP) and dimethylallyl diphosphate (DMAPP). Acts in the terminal step of the DOXP/MEP pathway for isoprenoid precursor biosynthesis. The sequence is that of 4-hydroxy-3-methylbut-2-enyl diphosphate reductase from Pseudomonas putida (strain GB-1).